The primary structure comprises 502 residues: MQIKAEEISQIIEQQIQHYESRVEMSETGTVLSVGDQIARVYGVQNAMAMELLEFPGGVMGLVLNLEEDNVGVALLGEDTHIKEGDPVKRTGKIFSVPVGDAVTGRVIDPLGNPIDGLGPVEAKETRNVEIKAPGIIARKSVHEPMYTGLKAVDAMTPIGRGQRELIIGDRQTGKTAVCIDAILAQKGQGVFCFYVAIGQKKSTVALVAETLRRHGAMEYTTIISATASEPASLQFMSAYSGCTMAEYHRDNGRAALIIYDDLSKQAVSYRQMSLLLRRPPGREAYPGDVFYLHSRLLERAAKLSDALGAGSLTALPIIETQAGDVSAYIPTNVISITDGQVYLEPNLFNAGIRPAINVGLSVSRVGGAAQVKAMKQVAGTLRLDLAQYRELAAFAQFGSDLDKATQLKLSRGMRMVELLKQPQYKPMNVAEQVISLFAGTRGFMDDVPVEAVRKFEEGLQEYFHNAKSDILNEIQEKKALDEGLIAKLGAAIDEFKKGFKA.

169-176 (GDRQTGKT) contacts ATP.

Belongs to the ATPase alpha/beta chains family. F-type ATPases have 2 components, CF(1) - the catalytic core - and CF(0) - the membrane proton channel. CF(1) has five subunits: alpha(3), beta(3), gamma(1), delta(1), epsilon(1). CF(0) has three main subunits: a(1), b(2) and c(9-12). The alpha and beta chains form an alternating ring which encloses part of the gamma chain. CF(1) is attached to CF(0) by a central stalk formed by the gamma and epsilon chains, while a peripheral stalk is formed by the delta and b chains.

The protein localises to the cell inner membrane. The enzyme catalyses ATP + H2O + 4 H(+)(in) = ADP + phosphate + 5 H(+)(out). In terms of biological role, produces ATP from ADP in the presence of a proton gradient across the membrane. The alpha chain is a regulatory subunit. This Solidesulfovibrio magneticus (strain ATCC 700980 / DSM 13731 / RS-1) (Desulfovibrio magneticus) protein is ATP synthase subunit alpha.